Reading from the N-terminus, the 338-residue chain is Nicotinate-nucleotide--dimethylbenzimidazole phosphoribosyltransferase (338 aa).

Glu305 (proton acceptor) is an active-site residue.

This sequence belongs to the CobT family.

The enzyme catalyses 5,6-dimethylbenzimidazole + nicotinate beta-D-ribonucleotide = alpha-ribazole 5'-phosphate + nicotinate + H(+). It participates in nucleoside biosynthesis; alpha-ribazole biosynthesis; alpha-ribazole from 5,6-dimethylbenzimidazole: step 1/2. Functionally, catalyzes the synthesis of alpha-ribazole-5'-phosphate from nicotinate mononucleotide (NAMN) and 5,6-dimethylbenzimidazole (DMB). This chain is Nicotinate-nucleotide--dimethylbenzimidazole phosphoribosyltransferase, found in Rhizobium etli (strain ATCC 51251 / DSM 11541 / JCM 21823 / NBRC 15573 / CFN 42).